The following is an 85-amino-acid chain: Large ribosomal subunit protein bL31B (85 aa).

Belongs to the bacterial ribosomal protein bL31 family. Type B subfamily. In terms of assembly, part of the 50S ribosomal subunit.

This Bifidobacterium longum subsp. infantis (strain ATCC 15697 / DSM 20088 / JCM 1222 / NCTC 11817 / S12) protein is Large ribosomal subunit protein bL31B.